Reading from the N-terminus, the 177-residue chain is MDPTAPGSSVSSLPLLLVLALGLAILHCVVADGNTTRTPETNGSLCGAPGENCTGTTPRQKVKTHFSRCPKQYKHYCIHGRCRFVVDEQTPSCICEKGYFGARCERVDLFYLQQDRGQILVVCLIVVMVVFIILVIGVCTCCHPLRKHRKKKKEEKMETLDKDKTPISEDIQETNIA.

Residues 1 to 31 (MDPTAPGSSVSSLPLLLVLALGLAILHCVVA) form the signal peptide. Residues 32-118 (DGNTTRTPET…LFYLQQDRGQ (87 aa)) are Extracellular-facing. Asn-34, Asn-42, and Asn-52 each carry an N-linked (GlcNAc...) asparagine glycan. The 41-residue stretch at 65 to 105 (HFSRCPKQYKHYCIHGRCRFVVDEQTPSCICEKGYFGARCE) folds into the EGF-like domain. 3 disulfides stabilise this stretch: Cys-69–Cys-82, Cys-77–Cys-93, and Cys-95–Cys-104. A propeptide spans 112-177 (LQQDRGQILV…SEDIQETNIA (66 aa)) (removed in mature form). The chain crosses the membrane as a helical span at residues 119 to 139 (ILVVCLIVVMVVFIILVIGVC). Residues 140–177 (TCCHPLRKHRKKKKEEKMETLDKDKTPISEDIQETNIA) lie on the Cytoplasmic side of the membrane. The disordered stretch occupies residues 153-177 (KEEKMETLDKDKTPISEDIQETNIA). Positions 154 to 167 (EEKMETLDKDKTPI) are enriched in basic and acidic residues.

In terms of assembly, monomer. Interacts with EGFR and ERBB4. As to expression, found in several mouse tissues including kidney, uterus and liver, as well as in beta tumor cell line and MCF-7 cells. It is not detected in the brain.

The protein resides in the secreted. The protein localises to the extracellular space. It localises to the cell membrane. Its function is as follows. Growth factor that binds to EGFR, ERBB4 and other EGF receptor family members. Potent mitogen for retinal pigment epithelial cells and vascular smooth muscle cells. The polypeptide is Probetacellulin (Btc) (Mus musculus (Mouse)).